Consider the following 1229-residue polypeptide: Vacuolar protein sorting-associated protein 8 homolog (1229 aa).

The disordered stretch occupies residues 67–89 (EFGMPVPHATPTPSIGEDSTIRT). One copy of the CHCR repeat lies at 901–1063 (ETTRLLSLHY…ILPHQELQSI (163 aa)). Residues 1148–1189 (CSMCRQRLYDHSQVLIFGGCGHGIHEQCMEESETQFEECPRC) form an RING-type; atypical zinc finger.

The protein belongs to the VPS8 family. Component of the class C core vacuole/endosome tethering (CORVET) complex composed of at least Vps8, dor/Vps18, car/Vps33A and Vps16A; unlike in other species, Vps11 is not part of the Drosophila complex. Due to the reduced number of components the Drosophila CORVET complex is often referred to as the miniCORVET complex. Has a higher affinity than the homotypic fusion and vacuole protein sorting (HOPS) tethering complex-specific component lt/Vps41 for Vps16A, car/Vps33A and dor/Vps18, the core components shared by both tethering complexes.

It localises to the early endosome. Functionally, part of the class C core vacuole/endosome tethering (CORVET) complex involved in endo-lysosomal vesicle trafficking and lysosome biogenesis by facilitating docking and fusion of endosomal vesicles. The CORVET complex acts upstream of the homotypic fusion and vacuole protein sorting (HOPS) tethering complex but is not involved in autophagic flux. The CORVET complex may cooperate with the early endosomal tether Rbsn-5 to mediate endosomal fusion. As part of the CORVET complex recruited to endosomes by activated GTP-bound Rab5. Specifically required for endocytic trafficking in a subset of cells, such as hemocytes and nephrocytes, which are highly active in endocytosis. The sequence is that of Vacuolar protein sorting-associated protein 8 homolog from Drosophila melanogaster (Fruit fly).